Consider the following 446-residue polypeptide: uncharacterized protein (446 aa).

Disordered stretches follow at residues 63–95 (KNKPHDLKNPKRSVSFKYKPNNSRSDLEESDLR) and 155–232 (AESS…HPVK). The span at 156-169 (ESSVPTPKLTNESN) shows a compositional bias: polar residues. Basic and acidic residues-rich tracts occupy residues 182–199 (DQHESRTKKSMHSTDHSA) and 213–227 (ITKESELTRNDEARK).

This is an uncharacterized protein from Mus musculus (Mouse).